Consider the following 615-residue polypeptide: Chaperone protein HscA homolog (615 aa).

The protein belongs to the heat shock protein 70 family.

Its function is as follows. Chaperone involved in the maturation of iron-sulfur cluster-containing proteins. Has a low intrinsic ATPase activity which is markedly stimulated by HscB. This Aeromonas hydrophila subsp. hydrophila (strain ATCC 7966 / DSM 30187 / BCRC 13018 / CCUG 14551 / JCM 1027 / KCTC 2358 / NCIMB 9240 / NCTC 8049) protein is Chaperone protein HscA homolog.